A 345-amino-acid chain; its full sequence is Ferrochelatase (345 aa).

Residues histidine 215 and glutamate 296 each coordinate Fe cation.

Belongs to the ferrochelatase family.

The protein resides in the cytoplasm. The enzyme catalyses heme b + 2 H(+) = protoporphyrin IX + Fe(2+). It participates in porphyrin-containing compound metabolism; protoheme biosynthesis; protoheme from protoporphyrin-IX: step 1/1. Its function is as follows. Catalyzes the ferrous insertion into protoporphyrin IX. The protein is Ferrochelatase of Nitrobacter hamburgensis (strain DSM 10229 / NCIMB 13809 / X14).